A 650-amino-acid polypeptide reads, in one-letter code: Sodium-dependent phosphate transporter 2 (650 aa).

At 1-5 the chain is on the extracellular side; that stretch reads MAMDG. The helical transmembrane segment at 6–26 threads the bilayer; sequence YLWMVILGFIIAFILAFSVGA. At 27 to 46 the chain is on the cytoplasmic side; it reads NDVANSFGTAVGSGVVTLRQ. The chain crosses the membrane as a helical span at residues 47-67; the sequence is ACILASIFETTGSVLLGAKVG. The Extracellular portion of the chain corresponds to 68–83; sequence ETIRKGIIDVNLYNDT. Asparagine 81 is a glycosylation site (N-linked (GlcNAc...) asparagine). The chain crosses the membrane as a helical span at residues 84 to 104; that stretch reads VVTLMAGEVSAMVGSAVWQLI. The Cytoplasmic portion of the chain corresponds to 105 to 109; sequence ASFLR. The chain crosses the membrane as a helical span at residues 110–130; the sequence is LPISGTHCIVGSTIGFSLVAN. Over 131–142 the chain is Extracellular; it reads GTKGVQWMELVK. Residues 143–163 traverse the membrane as a helical segment; that stretch reads IVASWFISPLLSGFMSGVLFV. The Cytoplasmic portion of the chain corresponds to 164–192; it reads LIRMFILTKEDPVPNGLQALPLFYAATIA. A helical transmembrane segment spans residues 193–212; the sequence is INVFSIMYTGAPVLGLSLPI. Residue tryptophan 213 is a topological domain, extracellular. The helical transmembrane segment at 214 to 234 threads the bilayer; the sequence is AIALISFGVALLFAFFVWLFV. Topologically, residues 235–482 are cytoplasmic; it reads CPWMRRKIAG…EEKEEKDTAE (248 aa). A phosphoserine mark is found at serine 253, serine 256, serine 259, serine 268, serine 315, and serine 384. Positions 268–310 are disordered; it reads SPFKELPGAKASDDSAVPLTNPTGEAVGPSEGTSTGNHPRTAY. A helical membrane pass occupies residues 483–503; that stretch reads VHLLFHFLQVLTACFGSFAHG. At 504–530 the chain is on the extracellular side; the sequence is GNDVSNAIGPLVALWLIYEQGGVMQEA. Residues 531–551 form a helical membrane-spanning segment; sequence ATPVWLLFYGGVGICTGLWVW. The Cytoplasmic portion of the chain corresponds to 552–571; that stretch reads GRRVIQTMGKDLTPITPSSG. A helical transmembrane segment spans residues 572–586; the sequence is FTIELASAFTVVIAS. At 587–593 the chain is on the extracellular side; sequence NIGLPVS. A helical transmembrane segment spans residues 594–609; it reads TTHCKVGSVVAVGWIR. Topologically, residues 610 to 621 are cytoplasmic; it reads SRKAVDWHLFRN. Residues 622–642 traverse the membrane as a helical segment; sequence IFVAWFVTVPVAGLFSAAIMA. Over 643–650 the chain is Extracellular; it reads IFMYGILS.

Belongs to the inorganic phosphate transporter (PiT) (TC 2.A.20) family. In terms of assembly, homodimer.

It is found in the cell membrane. The protein resides in the apical cell membrane. The catalysed reaction is 2 Na(+)(out) + phosphate(out) = 2 Na(+)(in) + phosphate(in). Functionally, sodium-phosphate symporter which preferentially transports the monovalent form of phosphate with a stoichiometry of two sodium ions per phosphate ion. Plays a critical role in the determination of bone quality and strength by providing phosphate for bone mineralization. Required to maintain normal cerebrospinal fluid phosphate levels. Mediates phosphate-induced calcification of vascular smooth muscle cells (VCMCs) and can functionally compensate for loss of SLC20A1 in VCMCs. In terms of biological role, (Microbial infection) Functions as a retroviral receptor and confers hamster cells susceptibility to infection to Gibbon Ape Leukemia Virus (GaLV) and amphotropic murine leukemia virus (A-MuLV). This Cricetulus griseus (Chinese hamster) protein is Sodium-dependent phosphate transporter 2 (SLC20A2).